Consider the following 400-residue polypeptide: Phosphoglycerate kinase (400 aa).

Substrate is bound by residues Asp22–Asn24, Arg38, His61–Arg64, Arg119, and Arg152. ATP contacts are provided by residues Lys205, Gly296, Glu327, and Gly353–Thr356.

This sequence belongs to the phosphoglycerate kinase family. In terms of assembly, monomer.

The protein resides in the cytoplasm. The enzyme catalyses (2R)-3-phosphoglycerate + ATP = (2R)-3-phospho-glyceroyl phosphate + ADP. Its pathway is carbohydrate degradation; glycolysis; pyruvate from D-glyceraldehyde 3-phosphate: step 2/5. The sequence is that of Phosphoglycerate kinase from Campylobacter lari (strain RM2100 / D67 / ATCC BAA-1060).